Consider the following 358-residue polypeptide: Programmed cell death protein 2-like (358 aa).

Alanine 2 bears the N-acetylalanine mark. The residue at position 20 (serine 20) is a Phosphoserine. Threonine 22 carries the post-translational modification Phosphothreonine.

As to expression, higher expression in lung, colon, mammary gland, cervix, stomach and small intestine.

In terms of biological role, over-expression suppresses AP1, CREB, NFAT, and NF-kB transcriptional activation, and delays cell cycle progression at S phase. This chain is Programmed cell death protein 2-like (PDCD2L), found in Homo sapiens (Human).